We begin with the raw amino-acid sequence, 121 residues long: NAD(P)H-quinone oxidoreductase subunit 3, chloroplastic (121 aa).

Helical transmembrane passes span 10-30, 65-85, and 90-110; these read FFIFLLLASVIPILAFSISKF, MFALVFVIFDVETVFLYPWAM, and LGLSAFIEALVFVFILIIGLV.

The protein belongs to the complex I subunit 3 family. As to quaternary structure, NDH is composed of at least 16 different subunits, 5 of which are encoded in the nucleus.

It is found in the plastid. It localises to the chloroplast thylakoid membrane. The catalysed reaction is a plastoquinone + NADH + (n+1) H(+)(in) = a plastoquinol + NAD(+) + n H(+)(out). It carries out the reaction a plastoquinone + NADPH + (n+1) H(+)(in) = a plastoquinol + NADP(+) + n H(+)(out). Its function is as follows. NDH shuttles electrons from NAD(P)H:plastoquinone, via FMN and iron-sulfur (Fe-S) centers, to quinones in the photosynthetic chain and possibly in a chloroplast respiratory chain. The immediate electron acceptor for the enzyme in this species is believed to be plastoquinone. Couples the redox reaction to proton translocation, and thus conserves the redox energy in a proton gradient. This chain is NAD(P)H-quinone oxidoreductase subunit 3, chloroplastic, found in Physcomitrium patens (Spreading-leaved earth moss).